Reading from the N-terminus, the 185-residue chain is Elongation factor P 1 (185 aa).

Belongs to the elongation factor P family.

It is found in the cytoplasm. The protein operates within protein biosynthesis; polypeptide chain elongation. In terms of biological role, involved in peptide bond synthesis. Stimulates efficient translation and peptide-bond synthesis on native or reconstituted 70S ribosomes in vitro. Probably functions indirectly by altering the affinity of the ribosome for aminoacyl-tRNA, thus increasing their reactivity as acceptors for peptidyl transferase. This Chlamydia caviae (strain ATCC VR-813 / DSM 19441 / 03DC25 / GPIC) (Chlamydophila caviae) protein is Elongation factor P 1 (efp1).